We begin with the raw amino-acid sequence, 319 residues long: Translocon-associated protein subunit alpha (319 aa).

The N-terminal stretch at 1 to 21 is a signal peptide; that stretch reads MRLLPRLLLLFLLAFPAAVLL. The Lumenal segment spans residues 22–208; it reads RGGPGGSLAV…EREDGLDGET (187 aa). Residues 35 to 76 show a composition bias toward acidic residues; that stretch reads LTEDEETVEDPIIEDEDDEAEVEEDEPTDLAEEKEEEEDVSS. The segment at 35-84 is disordered; that stretch reads LTEDEETVEDPIIEDEDDEAEVEEDEPTDLAEEKEEEEDVSSEPEASPSA. N-linked (GlcNAc...) asparagine glycans are attached at residues N137 and N192. Residues 209–229 traverse the membrane as a helical segment; that stretch reads IFMYMFLAGLGLLVVVGLHQL. The Cytoplasmic portion of the chain corresponds to 230-319; sequence LESRKRKRPI…SLRQLAVCGI (90 aa). The residue at position 248 (S248) is a Phosphoserine. The residue at position 261 (T261) is a Phosphothreonine.

Belongs to the TRAP-alpha family. In terms of assembly, heterotetramer of TRAP-alpha, TRAP-beta, TRAP-delta and TRAP-gamma. Interacts with palmitoylated calnexin (CALX), the interaction is required for efficient folding of glycosylated proteins.

The protein resides in the endoplasmic reticulum membrane. TRAP proteins are part of a complex whose function is to bind calcium to the ER membrane and thereby regulate the retention of ER resident proteins. May be involved in the recycling of the translocation apparatus after completion of the translocation process or may function as a membrane-bound chaperone facilitating folding of translocated proteins. The sequence is that of Translocon-associated protein subunit alpha (Ssr1) from Rattus norvegicus (Rat).